Here is an 872-residue protein sequence, read N- to C-terminus: N-acetyltransferase eso1 (872 aa).

The polymerase type-Y stretch occupies residues 1-591; that stretch reads MELGKSKFSW…KQVKPKTYGR (591 aa). The region spanning 29-285 is the UmuC domain; sequence VAHIDQDAFY…LKITDIRMLG (257 aa). The UBZ3-type zinc finger occupies 533 to 567; that stretch reads SADETYTCEECEQKITLSERNEHEDYHIALSISRK. Zn(2+) contacts are provided by Cys540, Cys543, His555, and His559. Residues 569–602 form a disordered region; sequence RYNNLVPPSHDKPKQVKPKTYGRKTGSKHYAPLS. Residues 583–595 are compositionally biased toward basic residues; that stretch reads QVKPKTYGRKTGS. The interval 592–872 is acetyltransferase; it reads KTGSKHYAPL…KSLRYAVYES (281 aa). The segment at 653–677 adopts a CCHH-type zinc-finger fold; sequence VTCSECSMEYNSTSEEDILLHSRFH.

In the C-terminal section; belongs to the acetyltransferase family. ECO subfamily. This sequence in the N-terminal section; belongs to the DNA polymerase type-Y family. In terms of assembly, interacts with pds5.

The protein resides in the nucleus. Functionally, probable acetyltransferase required for the establishment of sister chromatid cohesion and couple the processes of cohesion and DNA replication to ensure that only sister chromatids become paired together. In contrast to the structural cohesins, the deposition and establishment factors are required only during S phase. The relevance of acetyltransferase function remains unclear. In Schizosaccharomyces pombe (strain 972 / ATCC 24843) (Fission yeast), this protein is N-acetyltransferase eso1 (eso1).